Reading from the N-terminus, the 511-residue chain is Pentatricopeptide repeat-containing protein At5g08510 (511 aa).

10 PPR repeats span residues cysteine 46–proline 80, serine 81–serine 115, aspartate 116–arginine 146, aspartate 147–serine 181, tryptophan 182–proline 213, asparagine 214–aspartate 248, asparagine 249–glutamine 279, asparagine 281–proline 315, aspartate 316–valine 346, and lysine 352–lysine 382. A type E motif region spans residues valine 387–valine 462. Positions glycine 463–lysine 494 are type E(+) motif.

This sequence belongs to the PPR family. PCMP-E subfamily.

This Arabidopsis thaliana (Mouse-ear cress) protein is Pentatricopeptide repeat-containing protein At5g08510 (PCMP-E20).